A 109-amino-acid polypeptide reads, in one-letter code: Nucleoid-associated protein SO_2014 (109 aa).

Belongs to the YbaB/EbfC family. Homodimer.

Its subcellular location is the cytoplasm. It localises to the nucleoid. Functionally, binds to DNA and alters its conformation. May be involved in regulation of gene expression, nucleoid organization and DNA protection. This Shewanella oneidensis (strain ATCC 700550 / JCM 31522 / CIP 106686 / LMG 19005 / NCIMB 14063 / MR-1) protein is Nucleoid-associated protein SO_2014.